The sequence spans 614 residues: DNA mismatch repair protein MutL (614 aa).

The protein belongs to the DNA mismatch repair MutL/HexB family.

Functionally, this protein is involved in the repair of mismatches in DNA. It is required for dam-dependent methyl-directed DNA mismatch repair. May act as a 'molecular matchmaker', a protein that promotes the formation of a stable complex between two or more DNA-binding proteins in an ATP-dependent manner without itself being part of a final effector complex. The chain is DNA mismatch repair protein MutL from Thermoanaerobacter pseudethanolicus (strain ATCC 33223 / 39E) (Clostridium thermohydrosulfuricum).